The chain runs to 412 residues: Translation initiation factor 2 subunit gamma (412 aa).

One can recognise a tr-type G domain in the interval 7–203; sequence QPEVNIGLVG…AIESEIPTPD (197 aa). Residues 16–23 form a G1 region; it reads GHVDHGKT. Mg(2+) contacts are provided by Asp19, Thr23, Gly44, and Ser46. A GTP-binding site is contributed by 19 to 24; that stretch reads DHGKTT. Residues 44–48 form a G2 region; it reads GISIR. The G3 stretch occupies residues 90-93; it reads DAPG. GTP is bound by residues 146–149 and 181–183; these read NKVD and SAQ. Positions 146 to 149 are G4; sequence NKVD. A G5 region spans residues 181–183; the sequence is SAQ.

Belongs to the TRAFAC class translation factor GTPase superfamily. Classic translation factor GTPase family. EIF2G subfamily. As to quaternary structure, heterotrimer composed of an alpha, a beta and a gamma chain. It depends on Mg(2+) as a cofactor.

It carries out the reaction GTP + H2O = GDP + phosphate + H(+). EIF-2 functions in the early steps of protein synthesis by forming a ternary complex with GTP and initiator tRNA. This is Translation initiation factor 2 subunit gamma from Halorubrum lacusprofundi (strain ATCC 49239 / DSM 5036 / JCM 8891 / ACAM 34).